A 340-amino-acid chain; its full sequence is Guanine nucleotide-binding protein G(I)/G(S)/G(T) subunit beta-1 (340 aa).

WD repeat units lie at residues 53-83 (GHLA…IIWD), 95-125 (LRSS…SIYN), 141-170 (GHTG…ALWD), 182-212 (GHTG…KLWD), 224-254 (GHES…RLFD), 268-298 (NIIC…NVWD), and 310-340 (GHDN…KIWN).

The protein belongs to the WD repeat G protein beta family. G proteins are composed of 3 units, alpha, beta and gamma.

In terms of biological role, guanine nucleotide-binding proteins (G proteins) are involved as a modulator or transducer in various transmembrane signaling systems. The beta and gamma chains are required for the GTPase activity, for replacement of GDP by GTP, and for G protein-effector interaction. In Danio rerio (Zebrafish), this protein is Guanine nucleotide-binding protein G(I)/G(S)/G(T) subunit beta-1 (gnb1).